The chain runs to 296 residues: MEKLKEFERDLQPRQHLWYFEYYTGNNVGLFMKINRMIYSGQSDIQRIDIFENPDLGVVFSLDGITMTTEKDEFMYHEMLAHVPMFLHPNPKKVLIIGGGDGGTLREVLKHDSVEKAVLCEVDGLVIEAARKYLKQTSCGFDDPRTEIVIANGAEYVRKFKNEFDVIIIDSTDPTAGQGGHLFTEEFYQACYDALKEDGVFSAETEDPFYDIGWFKLAYKRISKVFPITKVYLGFMTTYPSGMWSYTFASKGIDPIKDFNPEKVKNFNKELKYYNEEVHVASFALPNFVKKELGLM.

Residues 16–251 enclose the PABS domain; sequence HLWYFEYYTG…GMWSYTFASK (236 aa). Position 46 (Q46) interacts with S-methyl-5'-thioadenosine. Residues H77 and D101 each contribute to the spermidine site. Residues E121 and 152–153 contribute to the S-methyl-5'-thioadenosine site; that span reads NG. The active-site Proton acceptor is D170. 170 to 173 is a binding site for spermidine; the sequence is DSTD.

This sequence belongs to the spermidine/spermine synthase family. As to quaternary structure, homodimer or homotetramer.

It localises to the cytoplasm. It carries out the reaction S-adenosyl 3-(methylsulfanyl)propylamine + putrescine = S-methyl-5'-thioadenosine + spermidine + H(+). It participates in amine and polyamine biosynthesis; spermidine biosynthesis; spermidine from putrescine: step 1/1. Functionally, catalyzes the irreversible transfer of a propylamine group from the amino donor S-adenosylmethioninamine (decarboxy-AdoMet) to putrescine (1,4-diaminobutane) to yield spermidine. This Thermotoga petrophila (strain ATCC BAA-488 / DSM 13995 / JCM 10881 / RKU-1) protein is Polyamine aminopropyltransferase.